A 103-amino-acid polypeptide reads, in one-letter code: Large ribosomal subunit protein bL21 (103 aa).

Belongs to the bacterial ribosomal protein bL21 family. Part of the 50S ribosomal subunit. Contacts protein L20.

Functionally, this protein binds to 23S rRNA in the presence of protein L20. This Alcanivorax borkumensis (strain ATCC 700651 / DSM 11573 / NCIMB 13689 / SK2) protein is Large ribosomal subunit protein bL21.